The sequence spans 166 residues: Phosphopantetheine adenylyltransferase (166 aa).

T14 contributes to the substrate binding site. ATP-binding positions include T14–F15 and H22. Substrate contacts are provided by K46, L78, and R92. ATP is bound by residues G93–R95, E103, and W128–S134.

This sequence belongs to the bacterial CoaD family. In terms of assembly, homohexamer. Requires Mg(2+) as cofactor.

The protein localises to the cytoplasm. The catalysed reaction is (R)-4'-phosphopantetheine + ATP + H(+) = 3'-dephospho-CoA + diphosphate. It participates in cofactor biosynthesis; coenzyme A biosynthesis; CoA from (R)-pantothenate: step 4/5. In terms of biological role, reversibly transfers an adenylyl group from ATP to 4'-phosphopantetheine, yielding dephospho-CoA (dPCoA) and pyrophosphate. The protein is Phosphopantetheine adenylyltransferase of Maridesulfovibrio salexigens (strain ATCC 14822 / DSM 2638 / NCIMB 8403 / VKM B-1763) (Desulfovibrio salexigens).